The sequence spans 986 residues: Bone morphogenetic protein 1 (986 aa).

The first 22 residues, 1–22 (MPGVARLPLLLGLLLLPRPGRP), serve as a signal peptide directing secretion. A propeptide spanning residues 23–120 (LDLADYTYDL…RWRGRSRSRR (98 aa)) is cleaved from the precursor. The disordered stretch occupies residues 83–125 (SIKAAVPGNTSTPSCQSTNGQPQRGACGRWRGRSRSRRAATSR). A compositionally biased stretch (polar residues) spans 90–104 (GNTSTPSCQSTNGQP). An N-linked (GlcNAc...) asparagine glycan is attached at Asn-91. Residues 112-122 (WRGRSRSRRAA) show a composition bias toward basic residues. The Peptidase M12A domain maps to 121 to 320 (AATSRPERVW…AQARKLYKCP (200 aa)). Residue Asn-142 is glycosylated (N-linked (GlcNAc...) asparagine). Intrachain disulfides connect Cys-163–Cys-319, Cys-183–Cys-205, Cys-185–Cys-186, and Cys-322–Cys-348. His-213 contacts Zn(2+). Glu-214 is an active-site residue. 2 residues coordinate Zn(2+): His-217 and His-223. 2 CUB domains span residues 322–434 (CGET…YEAI) and 435–546 (CGGD…NFFK). Asn-332 and Asn-363 each carry an N-linked (GlcNAc...) asparagine glycan. Intrachain disulfides connect Cys-375–Cys-397, Cys-435–Cys-461, Cys-488–Cys-510, Cys-551–Cys-563, Cys-559–Cys-572, Cys-574–Cys-587, Cys-591–Cys-617, Cys-644–Cys-666, Cys-707–Cys-718, Cys-714–Cys-727, Cys-729–Cys-742, Cys-747–Cys-773, Cys-800–Cys-822, Cys-860–Cys-890, and Cys-917–Cys-939. The region spanning 547–588 (EVDECSRPNRGGCEQRCLNTLGSYKCSCDPGYELAPDKRRCE) is the EGF-like 1; calcium-binding domain. The region spanning 591–703 (CGGFLTKLNG…KGFKAHFFSD (113 aa)) is the CUB 3 domain. N-linked (GlcNAc...) asparagine glycosylation is present at Asn-599. In terms of domain architecture, EGF-like 2; calcium-binding spans 704-743 (KDECSKDNGGCQQDCVNTFGSYECQCRSGFVLHDNKHDCK). 2 CUB domains span residues 747–859 (CDHK…HATE) and 860–976 (CGGQ…YTST). An omega-N-methylarginine mark is found at Arg-934 and Arg-937.

Interacts with POSTN, the interaction promotes deposition on the extracellular matrix. Requires Zn(2+) as cofactor. Post-translationally, proteolytically activated in the trans-Golgi network by furin-like/paired basic proprotein convertases, cleavage is not required for secretion. As to expression, ubiquitous.

It is found in the golgi apparatus. The protein localises to the trans-Golgi network. The protein resides in the secreted. It localises to the extracellular space. Its subcellular location is the extracellular matrix. It carries out the reaction Cleavage of the C-terminal propeptide at Ala-|-Asp in type I and II procollagens and at Arg-|-Asp in type III.. Its activity is regulated as follows. Activity is increased by the procollagen C-endopeptidase enhancer protein. Functionally, metalloprotease that plays key roles in regulating the formation of the extracellular matrix (ECM) via processing of various precursor proteins into mature functional enzymes or structural proteins. Thereby participates in several developmental and physiological processes such as cartilage and bone formation, muscle growth and homeostasis, wound healing and tissue repair. Roles in ECM formation include cleavage of the C-terminal propeptides from procollagens such as procollagen I, II and III or the proteolytic activation of the enzyme lysyl oxidase LOX, necessary to formation of covalent cross-links in collagen and elastic fibers. Additional substrates include matricellular thrombospondin-1/THBS1 whose cleavage leads to cell adhesion disruption and TGF-beta activation. Plays an important role in bone repair by acting as a coactivator of BMP7. In Homo sapiens (Human), this protein is Bone morphogenetic protein 1 (BMP1).